The sequence spans 282 residues: Probable protein phosphatase 2C 45 (282 aa).

Residues 27–272 enclose the PPM-type phosphatase domain; it reads SYGYASSPGK…DNITCVVVRF (246 aa). Mn(2+)-binding residues include aspartate 63, glycine 64, aspartate 224, and aspartate 263.

This sequence belongs to the PP2C family. Mg(2+) is required as a cofactor. The cofactor is Mn(2+).

The catalysed reaction is O-phospho-L-seryl-[protein] + H2O = L-seryl-[protein] + phosphate. It catalyses the reaction O-phospho-L-threonyl-[protein] + H2O = L-threonyl-[protein] + phosphate. The polypeptide is Probable protein phosphatase 2C 45 (Oryza sativa subsp. japonica (Rice)).